A 612-amino-acid polypeptide reads, in one-letter code: UBA domain-containing protein 6 (612 aa).

The UBA domain occupies 3-42 (DLDTKIKTLKNMGVSESDAKDSLERCGYDVESAAEFIFSG). Position 595 is a phosphoserine (serine 595).

Its subcellular location is the cytoplasm. It is found in the nucleus. The chain is UBA domain-containing protein 6 (ucp6) from Schizosaccharomyces pombe (strain 972 / ATCC 24843) (Fission yeast).